The following is a 256-amino-acid chain: Putative cysteine-rich repeat secretory protein 21 (256 aa).

Positions 1–30 (MYSSVSKRLVSVHILVVVALQLLFIPNVLS) are cleaved as a signal peptide. Gnk2-homologous domains are found at residues 37–139 (YLHH…SIDT) and 145–253 (YQNN…LYPF).

It belongs to the cysteine-rich repeat secretory protein family.

Its subcellular location is the secreted. This chain is Putative cysteine-rich repeat secretory protein 21 (CRRSP21), found in Arabidopsis thaliana (Mouse-ear cress).